A 467-amino-acid chain; its full sequence is 3-isopropylmalate dehydratase large subunit (467 aa).

The [4Fe-4S] cluster site is built by cysteine 349, cysteine 409, and cysteine 412. The interval 422 to 443 (PGQRSASTSNRNFEGRQGRGGR) is disordered.

Belongs to the aconitase/IPM isomerase family. LeuC type 1 subfamily. As to quaternary structure, heterodimer of LeuC and LeuD. The cofactor is [4Fe-4S] cluster.

The catalysed reaction is (2R,3S)-3-isopropylmalate = (2S)-2-isopropylmalate. Its pathway is amino-acid biosynthesis; L-leucine biosynthesis; L-leucine from 3-methyl-2-oxobutanoate: step 2/4. In terms of biological role, catalyzes the isomerization between 2-isopropylmalate and 3-isopropylmalate, via the formation of 2-isopropylmaleate. This is 3-isopropylmalate dehydratase large subunit from Paramagnetospirillum magneticum (strain ATCC 700264 / AMB-1) (Magnetospirillum magneticum).